The sequence spans 172 residues: DCC family protein At1g52590, chloroplastic (172 aa).

The N-terminal 25 residues, M1–S25, are a transit peptide targeting the chloroplast.

This sequence belongs to the DCC thiol-disulfide oxidoreductase family.

It is found in the plastid. Its subcellular location is the chloroplast. The chain is DCC family protein At1g52590, chloroplastic from Arabidopsis thaliana (Mouse-ear cress).